A 496-amino-acid polypeptide reads, in one-letter code: Cytochrome P450 3A30 (496 aa).

A heme-binding site is contributed by C441.

Belongs to the cytochrome P450 family. Heme serves as cofactor. In terms of tissue distribution, highly expressed in liver and intestine. Moderate expression in gill and spleen. Low expression in kidney, brain and heart.

Its subcellular location is the endoplasmic reticulum membrane. It is found in the microsome membrane. The catalysed reaction is an organic molecule + reduced [NADPH--hemoprotein reductase] + O2 = an alcohol + oxidized [NADPH--hemoprotein reductase] + H2O + H(+). In terms of biological role, putative steroid 6-beta-hydroxylase. This Fundulus heteroclitus (Killifish) protein is Cytochrome P450 3A30 (cyp3a30).